Here is a 27-residue protein sequence, read N- to C-terminus: Cysteine-rich venom protein tropirin (27 aa).

It belongs to the CRISP family. Contains 8 disulfide bonds. Expressed by the venom gland.

It localises to the secreted. Its function is as follows. Blocks contraction of smooth muscle elicited by high potassium-induced depolarization, but does not block caffeine-stimulated contraction. May target voltage-gated calcium channels on smooth muscle. The chain is Cysteine-rich venom protein tropirin from Tropidechis carinatus (Australian rough-scaled snake).